The chain runs to 692 residues: MAEAHISITVNGEAKEVEASQTGVELFADDKNIIAVRLNGELRDLYTPLHDGDNVESVTLDSPDGTGIMRHSATHVMAQAVQEVRPDAKLGIGPVIENGFYYDFDVKDPFTPDDLKTIEKHMQRIIKSAQRFQRRVVSEEEALREEADEPYKIELIKDKEDALETEAAVDISHKELSMYDNLDREGNVVWSDLCRGPHLPNTRYIKAFKLERAAAAYWKGSEANPMLQRIYGVAFPTKDELKAYQTRMEEAAKRDHRKLGQEMDLFSFPDEIGPGLAVFHPKGAAIINAMEDYSREMHRKNHYSFVQTPHITKGGLYETSGHLQWYKDGMYPPMHLDEEKDENGNIVKQGFDYYLKPMNCPMHNLIFKSRQRSYRELPLRLFEFGTVYRYEKSGVVHGLTRVRGLTQDDSHIYCTREQMKDELKNLLNFVLKVLKDYGLNDFYLELSTKDEHKFVGSDEIWEEATNTLAEVAEESGLELVADPGGAAFYGPKISVQARDAIGRTWQVSTIQLDFNLPERFQLEYIAPDGSHQRPVMIHRALFGSIERFFAILLEHYAGAFPAWLAPVQALGVPVADEFAPHLDKFMNSLEEDLVRVETDNSDDRFGKKIRNASKSKVPYIIIAGEEDMNNNAVSFRFRDGSQLNGVPVDQAKAWILETITKRVQVNSVDDFKAATGQPVENVEFGVADTDAE.

In terms of domain architecture, TGS spans 2 to 59 (AEAHISITVNGEAKEVEASQTGVELFADDKNIIAVRLNGELRDLYTPLHDGDNVESVT). A catalytic region spans residues 255–561 (DHRKLGQEMD…LLEHYAGAFP (307 aa)). Zn(2+) contacts are provided by cysteine 360, histidine 411, and histidine 538.

It belongs to the class-II aminoacyl-tRNA synthetase family. As to quaternary structure, homodimer. Zn(2+) serves as cofactor.

The protein localises to the cytoplasm. The catalysed reaction is tRNA(Thr) + L-threonine + ATP = L-threonyl-tRNA(Thr) + AMP + diphosphate + H(+). In terms of biological role, catalyzes the attachment of threonine to tRNA(Thr) in a two-step reaction: L-threonine is first activated by ATP to form Thr-AMP and then transferred to the acceptor end of tRNA(Thr). Also edits incorrectly charged L-seryl-tRNA(Thr). The chain is Threonine--tRNA ligase from Bifidobacterium animalis subsp. lactis (strain AD011).